Here is a 419-residue protein sequence, read N- to C-terminus: MSLLNSSLHELDPDVAAAVDAELHRQQSTLEMIASENFAPVAVMEAQGSVLTNKYAEGYPGRRYYGGCEHVDVVEQIAIDRIKALFGAEAANVQPHSGAQANAAAMFALLKPGDTIMGLNLAHGGHLTHGMKINFSGKLYNVVPYHVDESGVVDMEEVERLAKESQPKLIVAGWSAYPRQLDFAAFRRIADEVGAYLMVDMAHFAGLVAAGLHPNPVPHAHVVTTTTHKTLGGPRGGVILSTQELAKKINSAVFPGQQGGPLEHVIAAKAVSFKIAAGEEFKERQQRTLDGARILAERLVQPDVTEVGVSVLSGGTDVHLVLVDLRNSELDGQQAEDRLHELGITVNRNAIPNDPRPPMVTSGLRIGTPALATRGFGAEDFTEVAEIIAAALKPSYDADDLKARVVALAEKFPLYPGLK.

Residues Leu121 and 125 to 127 (GHL) each bind (6S)-5,6,7,8-tetrahydrofolate. Lys229 is subject to N6-(pyridoxal phosphate)lysine.

This sequence belongs to the SHMT family. Homodimer. Pyridoxal 5'-phosphate is required as a cofactor.

The protein resides in the cytoplasm. It carries out the reaction (6R)-5,10-methylene-5,6,7,8-tetrahydrofolate + glycine + H2O = (6S)-5,6,7,8-tetrahydrofolate + L-serine. It functions in the pathway one-carbon metabolism; tetrahydrofolate interconversion. Its pathway is amino-acid biosynthesis; glycine biosynthesis; glycine from L-serine: step 1/1. Its function is as follows. Catalyzes the reversible interconversion of serine and glycine with tetrahydrofolate (THF) serving as the one-carbon carrier. This reaction serves as the major source of one-carbon groups required for the biosynthesis of purines, thymidylate, methionine, and other important biomolecules. Also exhibits THF-independent aldolase activity toward beta-hydroxyamino acids, producing glycine and aldehydes, via a retro-aldol mechanism. The sequence is that of Serine hydroxymethyltransferase from Streptomyces griseus subsp. griseus (strain JCM 4626 / CBS 651.72 / NBRC 13350 / KCC S-0626 / ISP 5235).